The chain runs to 208 residues: Holliday junction resolvase RecU (208 aa).

Mg(2+) is bound by residues Thr-86, Asp-88, Glu-101, and Gln-120.

This sequence belongs to the RecU family. Mg(2+) is required as a cofactor.

Its subcellular location is the cytoplasm. It carries out the reaction Endonucleolytic cleavage at a junction such as a reciprocal single-stranded crossover between two homologous DNA duplexes (Holliday junction).. Endonuclease that resolves Holliday junction intermediates in genetic recombination. Cleaves mobile four-strand junctions by introducing symmetrical nicks in paired strands. Promotes annealing of linear ssDNA with homologous dsDNA. Required for DNA repair, homologous recombination and chromosome segregation. The sequence is that of Holliday junction resolvase RecU from Lacticaseibacillus casei (strain BL23) (Lactobacillus casei).